Here is a 396-residue protein sequence, read N- to C-terminus: NADH-quinone oxidoreductase subunit D 2 (396 aa).

The protein belongs to the complex I 49 kDa subunit family. NDH-1 is composed of 14 different subunits. Subunits NuoB, C, D, E, F, and G constitute the peripheral sector of the complex.

It is found in the cell inner membrane. The catalysed reaction is a quinone + NADH + 5 H(+)(in) = a quinol + NAD(+) + 4 H(+)(out). NDH-1 shuttles electrons from NADH, via FMN and iron-sulfur (Fe-S) centers, to quinones in the respiratory chain. The immediate electron acceptor for the enzyme in this species is believed to be ubiquinone. Couples the redox reaction to proton translocation (for every two electrons transferred, four hydrogen ions are translocated across the cytoplasmic membrane), and thus conserves the redox energy in a proton gradient. In Beijerinckia indica subsp. indica (strain ATCC 9039 / DSM 1715 / NCIMB 8712), this protein is NADH-quinone oxidoreductase subunit D 2.